We begin with the raw amino-acid sequence, 422 residues long: Serine--tRNA ligase (422 aa).

Position 230–232 (230–232) interacts with L-serine; it reads TAE. An ATP-binding site is contributed by 261-263; it reads RAE. Glu284 contributes to the L-serine binding site. 348–351 lines the ATP pocket; that stretch reads EISS. Residue Ser383 coordinates L-serine.

It belongs to the class-II aminoacyl-tRNA synthetase family. Type-1 seryl-tRNA synthetase subfamily. As to quaternary structure, homodimer. The tRNA molecule binds across the dimer.

It localises to the cytoplasm. It carries out the reaction tRNA(Ser) + L-serine + ATP = L-seryl-tRNA(Ser) + AMP + diphosphate + H(+). The catalysed reaction is tRNA(Sec) + L-serine + ATP = L-seryl-tRNA(Sec) + AMP + diphosphate + H(+). It functions in the pathway aminoacyl-tRNA biosynthesis; selenocysteinyl-tRNA(Sec) biosynthesis; L-seryl-tRNA(Sec) from L-serine and tRNA(Sec): step 1/1. Its function is as follows. Catalyzes the attachment of serine to tRNA(Ser). Is also able to aminoacylate tRNA(Sec) with serine, to form the misacylated tRNA L-seryl-tRNA(Sec), which will be further converted into selenocysteinyl-tRNA(Sec). The chain is Serine--tRNA ligase from Pelotomaculum thermopropionicum (strain DSM 13744 / JCM 10971 / SI).